The chain runs to 62 residues: Protein UL148D (62 aa).

Residues 30–50 (WWISVAIVIFIGVCLVALMYF) traverse the membrane as a helical segment.

It localises to the host membrane. This is Protein UL148D (UL148D) from Human cytomegalovirus (strain Merlin) (HHV-5).